Here is a 124-residue protein sequence, read N- to C-terminus: Ribonuclease pancreatic A (124 aa).

The interval 1–24 (AESSAMKFERQHVDSGGSSSSNAN) is disordered. Substrate-binding residues include Lys-7 and Arg-10. The active-site Proton acceptor is His-12. Disulfide bonds link Cys-26–Cys-84, Cys-40–Cys-95, Cys-58–Cys-110, and Cys-65–Cys-72. Substrate-binding positions include 41 to 45 (KPVNT), Lys-66, and Arg-85. Catalysis depends on His-119, which acts as the Proton donor.

This sequence belongs to the pancreatic ribonuclease family. As to expression, pancreas.

Its subcellular location is the secreted. It catalyses the reaction an [RNA] containing cytidine + H2O = an [RNA]-3'-cytidine-3'-phosphate + a 5'-hydroxy-ribonucleotide-3'-[RNA].. It carries out the reaction an [RNA] containing uridine + H2O = an [RNA]-3'-uridine-3'-phosphate + a 5'-hydroxy-ribonucleotide-3'-[RNA].. The sequence is that of Ribonuclease pancreatic A from Cavia porcellus (Guinea pig).